We begin with the raw amino-acid sequence, 125 residues long: Ribonuclease P protein component (125 aa).

This sequence belongs to the RnpA family. In terms of assembly, consists of a catalytic RNA component (M1 or rnpB) and a protein subunit.

The enzyme catalyses Endonucleolytic cleavage of RNA, removing 5'-extranucleotides from tRNA precursor.. Its function is as follows. RNaseP catalyzes the removal of the 5'-leader sequence from pre-tRNA to produce the mature 5'-terminus. It can also cleave other RNA substrates such as 4.5S RNA. The protein component plays an auxiliary but essential role in vivo by binding to the 5'-leader sequence and broadening the substrate specificity of the ribozyme. In Rhodococcus jostii (strain RHA1), this protein is Ribonuclease P protein component.